The following is a 146-amino-acid chain: Sperm surface protein Sp17 (146 aa).

Residues 76–88 are compositionally biased toward basic and acidic residues; that stretch reads EHESEKCEAEEKS. Residues 76 to 109 are disordered; it reads EHESEKCEAEEKSQSVTEEETPVLTIDSEDDKDK. A compositionally biased stretch (acidic residues) spans 92–108; the sequence is TEEETPVLTIDSEDDKD. The IQ domain maps to 110 to 139; the sequence is EEMAALKIQAAFRGHLAREDVKKIRTNKAE.

As to quaternary structure, homodimer. May interact with ROPN1. In terms of processing, the N-terminus is blocked. In terms of tissue distribution, testis- and sperm-specific.

The protein resides in the membrane. In terms of biological role, sperm surface zona pellucida binding protein. Helps to bind spermatozoa to the zona pellucida with high affinity. Might function in binding zona pellucida and carbohydrates. The chain is Sperm surface protein Sp17 (SPA17) from Oryctolagus cuniculus (Rabbit).